Consider the following 187-residue polypeptide: uncharacterized protein (187 aa).

A helical transmembrane segment spans residues 8–28; that stretch reads FFILLAINFILAAGFVALVLL.

Its subcellular location is the membrane. This is an uncharacterized protein from Bacillus subtilis (strain 168).